The sequence spans 361 residues: Phospho-N-acetylmuramoyl-pentapeptide-transferase (361 aa).

Helical transmembrane passes span isoleucine 27 to tryptophan 47, glycine 70 to tryptophan 90, serine 97 to tyrosine 117, tyrosine 134 to leucine 154, threonine 167 to serine 187, glycine 199 to serine 219, threonine 236 to tyrosine 256, valine 263 to valine 283, leucine 288 to valine 308, and lysine 338 to leucine 358.

Belongs to the glycosyltransferase 4 family. MraY subfamily. It depends on Mg(2+) as a cofactor.

It localises to the cell inner membrane. The catalysed reaction is UDP-N-acetyl-alpha-D-muramoyl-L-alanyl-gamma-D-glutamyl-meso-2,6-diaminopimeloyl-D-alanyl-D-alanine + di-trans,octa-cis-undecaprenyl phosphate = di-trans,octa-cis-undecaprenyl diphospho-N-acetyl-alpha-D-muramoyl-L-alanyl-D-glutamyl-meso-2,6-diaminopimeloyl-D-alanyl-D-alanine + UMP. It functions in the pathway cell wall biogenesis; peptidoglycan biosynthesis. In terms of biological role, catalyzes the initial step of the lipid cycle reactions in the biosynthesis of the cell wall peptidoglycan: transfers peptidoglycan precursor phospho-MurNAc-pentapeptide from UDP-MurNAc-pentapeptide onto the lipid carrier undecaprenyl phosphate, yielding undecaprenyl-pyrophosphoryl-MurNAc-pentapeptide, known as lipid I. This Legionella pneumophila (strain Paris) protein is Phospho-N-acetylmuramoyl-pentapeptide-transferase.